Reading from the N-terminus, the 159-residue chain is Large ribosomal subunit protein uL22 (159 aa).

This sequence belongs to the universal ribosomal protein uL22 family. Part of the 50S ribosomal subunit.

Functionally, this protein binds specifically to 23S rRNA. It makes multiple contacts with different domains of the 23S rRNA in the assembled 50S subunit and ribosome. In terms of biological role, the globular domain of the protein is located near the polypeptide exit tunnel on the outside of the subunit, while an extended beta-hairpin is found that lines the wall of the exit tunnel in the center of the 70S ribosome. The polypeptide is Large ribosomal subunit protein uL22 (Methanopyrus kandleri (strain AV19 / DSM 6324 / JCM 9639 / NBRC 100938)).